The sequence spans 407 residues: Vancomycin aglycone glucosyltransferase (407 aa).

The protein belongs to the glycosyltransferase 28 family.

It carries out the reaction vancomycin aglycone + UDP-alpha-D-glucose = devancoaminyl-vancomycin + UDP. Its pathway is antibiotic biosynthesis; vancomycin biosynthesis. Its function is as follows. Glucosyltransferase that transfers glucose to the 4-OH-Phegly(4) residue of vancomycin aglycone (AGV) to produce devancoaminyl-vancomycin (DVV) in the biosynthesis of glycopeptide antibiotic chloroeremomycin, a member of the vancomycin group of antibiotics. The polypeptide is Vancomycin aglycone glucosyltransferase (gtfB) (Amycolatopsis orientalis (Nocardia orientalis)).